The sequence spans 180 residues: Cytidylate kinase (180 aa).

7-15 (GPPGSGKST) is a binding site for ATP.

Belongs to the cytidylate kinase family. Type 2 subfamily.

The protein localises to the cytoplasm. The enzyme catalyses CMP + ATP = CDP + ADP. It carries out the reaction dCMP + ATP = dCDP + ADP. This chain is Cytidylate kinase, found in Sulfurisphaera tokodaii (strain DSM 16993 / JCM 10545 / NBRC 100140 / 7) (Sulfolobus tokodaii).